The chain runs to 3390 residues: Genome polyprotein (3390 aa).

Residues 1–15 form an interaction with host EXOC1 region; sequence MNNQRKKTGKPSINM. Residues 1 to 100 are Cytoplasmic-facing; sequence MNNQRKKTGK…MLSIINKRKK (100 aa). The interval 37–72 is hydrophobic; homodimerization of capsid protein C; the sequence is LLNGQGPMKLVMAFIAFLRFLAIPPTAGVLARWGTF. Residues 101 to 114 constitute a propeptide, ER anchor for the capsid protein C, removed in mature form by serine protease NS3; that stretch reads TSLCLMMMLPATLA. Residues 101 to 118 traverse the membrane as a helical segment; it reads TSLCLMMMLPATLAFHLT. The Extracellular portion of the chain corresponds to 119 to 243; that stretch reads SRDGEPRMIV…VEKVETWALR (125 aa). N-linked (GlcNAc...) asparagine; by host glycosylation occurs at Asn183. The chain crosses the membrane as a helical span at residues 244–264; sequence HPGFTILALFLAHYIGTSLTQ. Lys265 is a topological domain (cytoplasmic). A helical transmembrane segment spans residues 266-280; it reads VVIFILLMLVTPSMT. Residues 281–723 are Extracellular-facing; it reads MRCVGVGNRD…VHQIFGSAYT (443 aa). Intrachain disulfides connect Cys283–Cys310, Cys340–Cys401, Cys354–Cys385, and Cys372–Cys396. The N-linked (GlcNAc...) asparagine; by host glycan is linked to Asn347. Residues 378-391 form a fusion peptide region; that stretch reads DRGWGNGCGLFGKG. Residue Asn433 is glycosylated (N-linked (GlcNAc...) asparagine; by host). Disulfide bonds link Cys463-Cys563 and Cys580-Cys611. The chain crosses the membrane as a helical span at residues 724–744; it reads ALFSGVSWIMKIGIGVLLTWI. At 745-750 the chain is on the cytoplasmic side; sequence GLNSKN. A helical membrane pass occupies residues 751–771; the sequence is TSMSFSCIAIGIITLYLGVVV. The Extracellular portion of the chain corresponds to 772–1193; it reads QADMGCVINW…MIGSNASDRM (422 aa). 6 disulfide bridges follow: Cys777-Cys788, Cys828-Cys916, Cys952-Cys996, Cys1053-Cys1102, Cys1064-Cys1086, and Cys1085-Cys1089. N-linked (GlcNAc...) asparagine; by host glycosylation is found at Asn903 and Asn980. 2 N-linked (GlcNAc...) asparagine; by host glycosylation sites follow: Asn1132 and Asn1188. Residues 1194-1218 traverse the membrane as a helical segment; sequence GMGVTYLALIATFKIQPFLALGFFL. The Cytoplasmic segment spans residues 1219 to 1224; that stretch reads RKLTSR. The helical transmembrane segment at 1225–1243 threads the bilayer; it reads ENLLLGVGLAMAATLRLPE. Residues 1244 to 1267 lie on the Lumenal side of the membrane; sequence DIEQMANGIALGLMALKLITQFET. The chain crosses the membrane as a helical span at residues 1268–1288; sequence YQLWTALVSLTCSNTIFTLTV. Residue Ala1289 is a topological domain, cytoplasmic. The helical transmembrane segment at 1290–1308 threads the bilayer; sequence WRTATLILAGISLLPVCQS. Residues 1309-1315 are Lumenal-facing; it reads SSMRKTD. Residues 1316 to 1336 traverse the membrane as a helical segment; the sequence is WLPMTVAAMGVPPLPLFIFSL. Residues 1337-1344 lie on the Cytoplasmic side of the membrane; that stretch reads KDTLKRRS. A helical transmembrane segment spans residues 1345–1365; that stretch reads WPLNEGVMAVGLVSILASSLL. The Lumenal portion of the chain corresponds to 1366–1368; that stretch reads RND. A helical membrane pass occupies residues 1369 to 1389; the sequence is VPMAGPLVAGGLLIACYVITG. Residues 1390-1443 lie on the Cytoplasmic side of the membrane; it reads TSADLTVEKAADVTWEEEAEQTGVSHNLMITVDDDGTMRIKDDETENILTVLLK. Positions 1396 to 1435 are interacts with and activates NS3 protease; that stretch reads VEKAADVTWEEEAEQTGVSHNLMITVDDDGTMRIKDDETE. An intramembrane region (helical) is located at residues 1444–1464; sequence TALLIVSGIFPCSIPATLLVW. Over 1465–2146 the chain is Cytoplasmic; it reads HTWQKQTQRS…VEELPETMET (682 aa). Residues 1474-1651 enclose the Peptidase S7 domain; it reads SGVLWDVPSP…NAEPDGPTPE (178 aa). Active-site charge relay system; for serine protease NS3 activity residues include His1524, Asp1548, and Ser1608. In terms of domain architecture, Helicase ATP-binding spans 1654-1810; it reads EEMFKKRNLT…QSNAPIQDEE (157 aa). The segment at 1658–1661 is important for RNA-binding; the sequence is KKRN. Residue 1667-1674 coordinates ATP; sequence LHPGSGKT. The DEAH box signature appears at 1758–1761; it reads DEAH. Positions 1821 to 1986 constitute a Helicase C-terminal domain; it reads GNEWITDFVG…GIIPALFEPE (166 aa). Lys1862 bears the N6-acetyllysine; by host mark. A helical membrane pass occupies residues 2147–2167; that stretch reads LLLLGLMILLTGGAMLFLISG. The Lumenal portion of the chain corresponds to 2168–2169; sequence KG. The helical intramembrane region spans 2170-2190; it reads IGKTSIGLICVIASSGMLWMA. Residue Asp2191 is a topological domain, lumenal. Residues 2192–2212 form a helical membrane-spanning segment; that stretch reads VPLQWIASAIVLEFFMMVLLI. Topologically, residues 2213–2227 are cytoplasmic; that stretch reads PEPEKQRTPQDNQLA. Residues 2228–2248 form a helical membrane-spanning segment; that stretch reads YVVIGILTLAAIVAANEMGLL. At 2249–2273 the chain is on the lumenal side; sequence ETTKRDLGMSKEPGVVSPTSYLDVD. An intramembrane region (helical) is located at residues 2274–2294; that stretch reads LHPASAWTLYAVATTVITPML. Over 2295–2305 the chain is Lumenal; that stretch reads RHTIENSTANV. 2 N-linked (GlcNAc...) asparagine; by host glycosylation sites follow: Asn2300 and Asn2304. The segment at residues 2306-2326 is an intramembrane region (helical); the sequence is SLAAIANQAVVLMGLDKGWPI. At 2327–2346 the chain is on the lumenal side; that stretch reads SKMDLGVPLLALGCYSQVNP. Residues 2347–2367 form a helical membrane-spanning segment; sequence LTLIAAVLLLVTHYAIIGPGL. Topologically, residues 2368 to 2412 are cytoplasmic; that stretch reads QAKATREAQKRTAAGIMKNPTVDGIMTIDLDPVIYDSKFEKQLGQ. Residues 2413-2433 traverse the membrane as a helical segment; sequence VMLLVLCAVQLLLMRTSWALC. Residues 2434–2458 lie on the Lumenal side of the membrane; the sequence is EVLTLATGPITTLWEGSPGKFWNTT. Asn2456 is a glycosylation site (N-linked (GlcNAc...) asparagine; by host). A helical membrane pass occupies residues 2459 to 2479; that stretch reads IAVSMANIFRGSYLAGAGLAF. Over 2480–3390 the chain is Cytoplasmic; the sequence is SIMKSVGTGK…KEEESEGAIW (911 aa). Positions 2492-2753 constitute an mRNA cap 0-1 NS5-type MT domain; it reads TGSQGETLGE…DVDLGAGTRH (262 aa). Ser2546 contacts S-adenosyl-L-methionine. Phosphoserine is present on Ser2546. Lys2551 acts as the For 2'-O-MTase activity in catalysis. Positions 2567–2570 match the SUMO-interacting motif motif; sequence VIDL. S-adenosyl-L-methionine-binding residues include Gly2576, Trp2577, Thr2594, Lys2595, Asp2621, and Val2622. Asp2636 acts as the For 2'-O-MTase activity in catalysis. Ile2637 is a binding site for S-adenosyl-L-methionine. Residues Lys2670 and Glu2706 each act as for 2'-O-MTase activity in the active site. An S-adenosyl-L-methionine-binding site is contributed by Tyr2708. Glu2927, His2931, Cys2936, and Cys2939 together coordinate Zn(2+). The RdRp catalytic domain occupies 3018–3168; the sequence is AMYADDTAGW…PIDDRFANAL (151 aa). Zn(2+) contacts are provided by His3202, Cys3218, and Cys3337.

This sequence in the N-terminal section; belongs to the class I-like SAM-binding methyltransferase superfamily. mRNA cap 0-1 NS5-type methyltransferase family. Homodimer. Interacts (via N-terminus) with host EXOC1 (via C-terminus); this interaction results in EXOC1 degradation through the proteasome degradation pathway. In terms of assembly, forms heterodimers with envelope protein E in the endoplasmic reticulum and Golgi. As to quaternary structure, homodimer; in the endoplasmic reticulum and Golgi. Interacts with protein prM. Interacts with non-structural protein 1. Homodimer; Homohexamer when secreted. Interacts with envelope protein E. In terms of assembly, interacts (via N-terminus) with serine protease NS3. As to quaternary structure, forms a heterodimer with serine protease NS3. May form homooligomers. Forms a heterodimer with NS2B. Interacts with NS4B. Interacts with unphosphorylated RNA-directed RNA polymerase NS5; this interaction stimulates RNA-directed RNA polymerase NS5 guanylyltransferase activity. In terms of assembly, interacts with host MAVS; this interaction inhibits the synthesis of IFN-beta. Interacts with host AUP1; the interaction occurs in the presence of Dengue virus NS4B and induces lipophagy which facilitates production of virus progeny particles. As to quaternary structure, interacts with serine protease NS3. Homodimer. Interacts with host STAT2; this interaction inhibits the phosphorylation of the latter, and, when all viral proteins are present (polyprotein), targets STAT2 for degradation. Interacts with serine protease NS3. In terms of processing, specific enzymatic cleavages in vivo yield mature proteins. Cleavages in the lumen of endoplasmic reticulum are performed by host signal peptidase, whereas cleavages in the cytoplasmic side are performed by serine protease NS3. Signal cleavage at the 2K-4B site requires a prior NS3 protease-mediated cleavage at the 4A-2K site. Cleaved in post-Golgi vesicles by a host furin, releasing the mature small envelope protein M, and peptide pr. This cleavage is incomplete as up to 30% of viral particles still carry uncleaved prM. Post-translationally, N-glycosylated. In terms of processing, N-glycosylated. The excreted form is glycosylated and this is required for efficient secretion of the protein from infected cells. Acetylated by host KAT5. Acetylation modulates NS3 RNA-binding and unwinding activities and plays an important positive role for viral replication. Post-translationally, sumoylation of RNA-directed RNA polymerase NS5 increases NS5 protein stability allowing proper viral RNA replication. In terms of processing, phosphorylated on serines residues. This phosphorylation may trigger NS5 nuclear localization.

Its subcellular location is the virion. The protein resides in the host nucleus. It is found in the host cytoplasm. The protein localises to the host perinuclear region. It localises to the secreted. Its subcellular location is the virion membrane. The protein resides in the host endoplasmic reticulum membrane. It is found in the host mitochondrion. The enzyme catalyses Selective hydrolysis of -Xaa-Xaa-|-Yaa- bonds in which each of the Xaa can be either Arg or Lys and Yaa can be either Ser or Ala.. It carries out the reaction RNA(n) + a ribonucleoside 5'-triphosphate = RNA(n+1) + diphosphate. The catalysed reaction is a ribonucleoside 5'-triphosphate + H2O = a ribonucleoside 5'-diphosphate + phosphate + H(+). It catalyses the reaction ATP + H2O = ADP + phosphate + H(+). The enzyme catalyses a 5'-end (5'-triphosphoguanosine)-ribonucleoside in mRNA + S-adenosyl-L-methionine = a 5'-end (N(7)-methyl 5'-triphosphoguanosine)-ribonucleoside in mRNA + S-adenosyl-L-homocysteine. It carries out the reaction a 5'-end (N(7)-methyl 5'-triphosphoguanosine)-ribonucleoside in mRNA + S-adenosyl-L-methionine = a 5'-end (N(7)-methyl 5'-triphosphoguanosine)-(2'-O-methyl-ribonucleoside) in mRNA + S-adenosyl-L-homocysteine + H(+). Plays a role in virus budding by binding to the cell membrane and gathering the viral RNA into a nucleocapsid that forms the core of a mature virus particle. During virus entry, may induce genome penetration into the host cytoplasm after hemifusion induced by the surface proteins. Can migrate to the cell nucleus where it modulates host functions. Overcomes the anti-viral effects of host EXOC1 by sequestering and degrading the latter through the proteasome degradation pathway. Its function is as follows. Inhibits RNA silencing by interfering with host Dicer. In terms of biological role, prevents premature fusion activity of envelope proteins in trans-Golgi by binding to envelope protein E at pH6.0. After virion release in extracellular space, gets dissociated from E dimers. Functionally, acts as a chaperone for envelope protein E during intracellular virion assembly by masking and inactivating envelope protein E fusion peptide. prM is the only viral peptide matured by host furin in the trans-Golgi network probably to avoid catastrophic activation of the viral fusion activity in acidic Golgi compartment prior to virion release. prM-E cleavage is inefficient, and many virions are only partially matured. These uncleaved prM would play a role in immune evasion. May play a role in virus budding. Exerts cytotoxic effects by activating a mitochondrial apoptotic pathway through M ectodomain. May display a viroporin activity. Its function is as follows. Binds to host cell surface receptor and mediates fusion between viral and cellular membranes. Envelope protein is synthesized in the endoplasmic reticulum in the form of heterodimer with protein prM. They play a role in virion budding in the ER, and the newly formed immature particle is covered with 60 spikes composed of heterodimer between precursor prM and envelope protein E. The virion is transported to the Golgi apparatus where the low pH causes dissociation of PrM-E heterodimers and formation of E homodimers. prM-E cleavage is inefficient, and many virions are only partially matured. These uncleaved prM would play a role in immune evasion. In terms of biological role, involved in immune evasion, pathogenesis and viral replication. Once cleaved off the polyprotein, is targeted to three destinations: the viral replication cycle, the plasma membrane and the extracellular compartment. Essential for viral replication. Required for formation of the replication complex and recruitment of other non-structural proteins to the ER-derived membrane structures. Excreted as a hexameric lipoparticle that plays a role against host immune response. Antagonizing the complement function. Binds to the host macrophages and dendritic cells. Inhibits signal transduction originating from Toll-like receptor 3 (TLR3). Functionally, disrupts the host endothelial glycocalyx layer of host pulmonary microvascular endothelial cells, inducing degradation of sialic acid and shedding of heparan sulfate proteoglycans. NS1 induces expression of sialidases, heparanase, and activates cathepsin L, which activates heparanase via enzymatic cleavage. These effects are probably linked to the endothelial hyperpermeability observed in severe dengue disease. Component of the viral RNA replication complex that functions in virion assembly and antagonizes the host immune response. Its function is as follows. Required cofactor for the serine protease function of NS3. May have membrane-destabilizing activity and form viroporins. In terms of biological role, displays three enzymatic activities: serine protease, NTPase and RNA helicase. NS3 serine protease, in association with NS2B, performs its autocleavage and cleaves the polyprotein at dibasic sites in the cytoplasm: C-prM, NS2A-NS2B, NS2B-NS3, NS3-NS4A, NS4A-2K and NS4B-NS5. NS3 RNA helicase binds RNA and unwinds dsRNA in the 3' to 5' direction. Functionally, regulates the ATPase activity of the NS3 helicase activity. NS4A allows NS3 helicase to conserve energy during unwinding. Plays a role in the inhibition of the host innate immune response. Interacts with host MAVS and thereby prevents the interaction between RIGI and MAVS. In turn, IFN-beta production is impaired. Interacts with host AUP1 which mediates induction of lipophagy in host cells and facilitates production of virus progeny particles. Functions as a signal peptide for NS4B and is required for the interferon antagonism activity of the latter. Its function is as follows. Induces the formation of ER-derived membrane vesicles where the viral replication takes place. Inhibits interferon (IFN)-induced host STAT1 phosphorylation and nuclear translocation, thereby preventing the establishment of cellular antiviral state by blocking the IFN-alpha/beta pathway. In terms of biological role, replicates the viral (+) and (-) RNA genome, and performs the capping of genomes in the cytoplasm. NS5 methylates viral RNA cap at guanine N-7 and ribose 2'-O positions. Besides its role in RNA genome replication, also prevents the establishment of cellular antiviral state by blocking the interferon-alpha/beta (IFN-alpha/beta) signaling pathway. Inhibits host TYK2 and STAT2 phosphorylation, thereby preventing activation of JAK-STAT signaling pathway. The sequence is that of Genome polyprotein from Dengue virus type 3 (strain China/80-2/1980) (DENV-3).